Here is a 380-residue protein sequence, read N- to C-terminus: tRNA-specific 2-thiouridylase MnmA (380 aa).

ATP is bound by residues 12–19 and M38; that span reads GLSGGVDS. The tract at residues 108 to 110 is interaction with target base in tRNA; it reads NPD. The active-site Nucleophile is C113. A disulfide bridge links C113 with C210. An ATP-binding site is contributed by G138. Residues 160 to 162 are interaction with tRNA; sequence KDQ. C210 serves as the catalytic Cysteine persulfide intermediate.

It belongs to the MnmA/TRMU family.

Its subcellular location is the cytoplasm. The catalysed reaction is S-sulfanyl-L-cysteinyl-[protein] + uridine(34) in tRNA + AH2 + ATP = 2-thiouridine(34) in tRNA + L-cysteinyl-[protein] + A + AMP + diphosphate + H(+). Functionally, catalyzes the 2-thiolation of uridine at the wobble position (U34) of tRNA, leading to the formation of s(2)U34. In Ureaplasma urealyticum serovar 10 (strain ATCC 33699 / Western), this protein is tRNA-specific 2-thiouridylase MnmA.